Consider the following 215-residue polypeptide: Pyrrolidone-carboxylate peptidase (215 aa).

Catalysis depends on residues glutamate 80, cysteine 143, and histidine 167.

Belongs to the peptidase C15 family. As to quaternary structure, homotetramer.

It localises to the cytoplasm. It carries out the reaction Release of an N-terminal pyroglutamyl group from a polypeptide, the second amino acid generally not being Pro.. Functionally, removes 5-oxoproline from various penultimate amino acid residues except L-proline. This is Pyrrolidone-carboxylate peptidase from Bacillus cereus (strain G9842).